The primary structure comprises 1209 residues: Zinc finger protein 804A (1209 aa).

The C2H2-type zinc-finger motif lies at 57-81 (FYCELCDKQYYKHQEFDNHINSYDH). A compositionally biased stretch (basic and acidic residues) spans 380 to 394 (VKHNEASTTEVENKN). 2 disordered regions span residues 380-401 (VKHN…TLAP) and 792-860 (PEEF…MKPQ). Basic residues predominate over residues 807 to 819 (KPKKKRRRKRGRF). Basic and acidic residues-rich tracts occupy residues 826-836 (LELKENTDYPV) and 848-860 (LISE…MKPQ).

In Homo sapiens (Human), this protein is Zinc finger protein 804A (ZNF804A).